The following is a 222-amino-acid chain: Riboflavin kinase (222 aa).

Positions 1–94 (METIDAEDAA…AKIFDVKDEQ (94 aa)) are H-T-H motif-like. A riboflavin kinase region spans residues 95–222 (YVLTGTVMSG…ENSEVVVVIG (128 aa)). Residue 104-109 (GVGEGR) coordinates CDP. Mg(2+)-binding residues include T133 and N135. The FMN site is built by T190 and E198. Residue 203-206 (TQLR) participates in CDP binding.

This sequence belongs to the archaeal riboflavin kinase family. Requires Mg(2+) as cofactor.

It catalyses the reaction riboflavin + CTP = CDP + FMN + H(+). The protein operates within cofactor biosynthesis; FMN biosynthesis; FMN from riboflavin (CTP route): step 1/1. In terms of biological role, catalyzes the CTP-dependent phosphorylation of riboflavin (vitamin B2) to form flavin mononucleotide (FMN). The polypeptide is Riboflavin kinase (ribK) (Methanocorpusculum labreanum (strain ATCC 43576 / DSM 4855 / Z)).